The sequence spans 102 residues: Large ribosomal subunit protein bL21 (102 aa).

The protein belongs to the bacterial ribosomal protein bL21 family. As to quaternary structure, part of the 50S ribosomal subunit. Contacts protein L20.

In terms of biological role, this protein binds to 23S rRNA in the presence of protein L20. The protein is Large ribosomal subunit protein bL21 of Ligilactobacillus salivarius (strain UCC118) (Lactobacillus salivarius).